The following is a 73-amino-acid chain: Serine rich endogenous peptide 14 (73 aa).

The N-terminal stretch at 1–31 is a signal peptide; the sequence is MAAKTSNLVALLLSLFLLLLSISSQVGLGEA. The interval 44-73 is disordered; it reads VSHPSPPPPHRSMAPPIFVPPSTSHKGQGP. The SCOOP motif signature appears at 59 to 73; that stretch reads PIFVPPSTSHKGQGP. Residues 64–73 show a composition bias toward polar residues; sequence PSTSHKGQGP. A SxS motif essential for MIK2 binding motif is present at residues 65–67; that stretch reads STS.

This sequence belongs to the serine rich endogenous peptide (SCOOP) phytocytokine family. As to quaternary structure, interacts with MIK2 (via extracellular leucine-rich repeat domain); this interaction triggers the formation of complex between MIK2 and the BAK1/SERK3 and SERK4 coreceptors, and subsequent BAK1 activation by phosphorylation. Mostly expressed in seedlings shoots and leaves, and, to a lower extent, in roots, stems, siliques, seeds and flowers.

It localises to the cell membrane. The protein localises to the secreted. The protein resides in the extracellular space. It is found in the apoplast. Its function is as follows. Brassicaceae-specific phytocytokine (plant endogenous peptide released into the apoplast) perceived by MIK2 in a BAK1/SERK3 and SERK4 coreceptors-dependent manner, that modulates various physiological and antimicrobial processes including growth prevention and reactive oxygen species (ROS) response regulation. Inhibits root growth and regulates root meristems. Prevents general growth and development. Exhibits antibacterial effects against Pseudomonas syringae pv. tomato DC3000, Ralstonia solanacearum, Bacillus subtilis and Agrobacterium tumefaciens, thus being an antimicrobial peptide (AMP). In Arabidopsis thaliana (Mouse-ear cress), this protein is Serine rich endogenous peptide 14.